The sequence spans 290 residues: UPF0761 membrane protein CKO_03126 (290 aa).

6 helical membrane-spanning segments follow: residues 44 to 64, 104 to 124, 140 to 160, 183 to 203, 210 to 230, and 244 to 264; these read LLSL…FPMF, VGAC…DSAL, FAVY…SLAI, VFPL…VPTT, AVVG…GFAL, and VLAV…IVLL.

It belongs to the UPF0761 family.

It localises to the cell inner membrane. The sequence is that of UPF0761 membrane protein CKO_03126 from Citrobacter koseri (strain ATCC BAA-895 / CDC 4225-83 / SGSC4696).